We begin with the raw amino-acid sequence, 79 residues long: U-actitoxin-Oulsp1 (79 aa).

Positions 1-21 (MNTKLVVVFLLSAILFVSVTA) are cleaved as a signal peptide. Positions 22–43 (SRPGKDLERDEAYETYDDENKR) are excised as a propeptide. The ShKT domain maps to 45–79 (CKDVFPAATCRHAKSVGNCSSEKYKRNCAITCGAC). Cystine bridges form between C45–C79, C54–C72, and C63–C76. The crucial for binding to potassium channels stretch occupies residues 67-68 (KY).

It belongs to the sea anemone type 1 potassium channel toxin family. Type 1b subfamily. In terms of processing, two similar peptides (OspTx2a-p1 and -p2) are obtained after synthesis and oxidative folding. They may differ by a D-Cys at position 76 (corresponding to OspTx2a-p2). Since C-terminal Cys residues are prone to racemization during solid-phase peptide synthesis, and if the presence of a D-amino acid is correct, it is probable that OspTx2a-p1 (L-Cys-76 form) corresponds to the native peptide.

It is found in the secreted. In terms of biological role, toxin that weakly blocks the two voltage-gated potassium channels on Kv1.2/KCNA2 (IC(50)=1.8-2.5 uM) and Kv1.6/KCNA6 (IC(50)=5.6-6.2 uM). In Oulactis sp. (Sea anemone), this protein is U-actitoxin-Oulsp1.